Consider the following 117-residue polypeptide: uncharacterized protein (117 aa).

This is an uncharacterized protein from Methanocaldococcus jannaschii (strain ATCC 43067 / DSM 2661 / JAL-1 / JCM 10045 / NBRC 100440) (Methanococcus jannaschii).